The following is a 128-amino-acid chain: Glycine cleavage system H protein (128 aa).

The Lipoyl-binding domain maps to 22–104; sequence TALVGVTDYA…YASGWLVKIK (83 aa). An N6-lipoyllysine modification is found at Lys-63.

This sequence belongs to the GcvH family. As to quaternary structure, the glycine cleavage system is composed of four proteins: P, T, L and H. It depends on (R)-lipoate as a cofactor.

Its function is as follows. The glycine cleavage system catalyzes the degradation of glycine. The H protein shuttles the methylamine group of glycine from the P protein to the T protein. The sequence is that of Glycine cleavage system H protein from Halothermothrix orenii (strain H 168 / OCM 544 / DSM 9562).